We begin with the raw amino-acid sequence, 155 residues long: SsrA-binding protein (155 aa).

The interval D132 to R155 is disordered.

Belongs to the SmpB family.

The protein localises to the cytoplasm. Required for rescue of stalled ribosomes mediated by trans-translation. Binds to transfer-messenger RNA (tmRNA), required for stable association of tmRNA with ribosomes. tmRNA and SmpB together mimic tRNA shape, replacing the anticodon stem-loop with SmpB. tmRNA is encoded by the ssrA gene; the 2 termini fold to resemble tRNA(Ala) and it encodes a 'tag peptide', a short internal open reading frame. During trans-translation Ala-aminoacylated tmRNA acts like a tRNA, entering the A-site of stalled ribosomes, displacing the stalled mRNA. The ribosome then switches to translate the ORF on the tmRNA; the nascent peptide is terminated with the 'tag peptide' encoded by the tmRNA and targeted for degradation. The ribosome is freed to recommence translation, which seems to be the essential function of trans-translation. This chain is SsrA-binding protein, found in Oceanobacillus iheyensis (strain DSM 14371 / CIP 107618 / JCM 11309 / KCTC 3954 / HTE831).